The following is a 266-amino-acid chain: Undecaprenyl-diphosphatase (266 aa).

A run of 7 helical transmembrane segments spans residues 41–61 (NLAFTIVVHVATVFSTLVILW), 82–102 (YVINILISMIPIGIVGVFFKD), 106–126 (AIFGSGLLIVGCMLLLTAALL), 140–160 (ISMKDAFIIGLAQACAVLPGL), 180–200 (LAQFSFLMVIPPILGEALLDG), 213–233 (IPTLSLIVGFIAAFVSGCLAC), and 245–265 (LIYFAIYCAIVGVVTIVVSQL).

This sequence belongs to the UppP family.

The protein localises to the cell inner membrane. The enzyme catalyses di-trans,octa-cis-undecaprenyl diphosphate + H2O = di-trans,octa-cis-undecaprenyl phosphate + phosphate + H(+). Catalyzes the dephosphorylation of undecaprenyl diphosphate (UPP). Confers resistance to bacitracin. The sequence is that of Undecaprenyl-diphosphatase from Bacteroides fragilis (strain ATCC 25285 / DSM 2151 / CCUG 4856 / JCM 11019 / LMG 10263 / NCTC 9343 / Onslow / VPI 2553 / EN-2).